Consider the following 339-residue polypeptide: Putative zinc metalloprotease CA_C1796 (339 aa).

Position 20 (His20) interacts with Zn(2+). Glu21 is an active-site residue. His24 provides a ligand contact to Zn(2+). A run of 3 helical transmembrane segments spans residues 91 to 113 (LSIVIAGPIMNLILAAVLFCIVG), 275 to 297 (QLGVMNLLPIPALDGGFVFLFLF), and 310 to 330 (VGFVNTIGFALLMILMIVVTI). Positions 99–177 (IMNLILAAVL…GIKLALKNNG (79 aa)) constitute a PDZ domain.

It belongs to the peptidase M50B family. The cofactor is Zn(2+).

It localises to the cell membrane. The chain is Putative zinc metalloprotease CA_C1796 from Clostridium acetobutylicum (strain ATCC 824 / DSM 792 / JCM 1419 / IAM 19013 / LMG 5710 / NBRC 13948 / NRRL B-527 / VKM B-1787 / 2291 / W).